Here is a 91-residue protein sequence, read N- to C-terminus: UPF0250 protein NGO_0791 (91 aa).

The protein belongs to the UPF0250 family.

This Neisseria gonorrhoeae (strain ATCC 700825 / FA 1090) protein is UPF0250 protein NGO_0791.